The primary structure comprises 238 residues: Enolase-phosphatase E1 (238 aa).

Belongs to the HAD-like hydrolase superfamily. MasA/MtnC family. In terms of assembly, monomer. The cofactor is Mg(2+).

It catalyses the reaction 5-methylsulfanyl-2,3-dioxopentyl phosphate + H2O = 1,2-dihydroxy-5-(methylsulfanyl)pent-1-en-3-one + phosphate. It participates in amino-acid biosynthesis; L-methionine biosynthesis via salvage pathway; L-methionine from S-methyl-5-thio-alpha-D-ribose 1-phosphate: step 3/6. The protein operates within amino-acid biosynthesis; L-methionine biosynthesis via salvage pathway; L-methionine from S-methyl-5-thio-alpha-D-ribose 1-phosphate: step 4/6. Its function is as follows. Bifunctional enzyme that catalyzes the enolization of 2,3-diketo-5-methylthiopentyl-1-phosphate (DK-MTP-1-P) into the intermediate 2-hydroxy-3-keto-5-methylthiopentenyl-1-phosphate (HK-MTPenyl-1-P), which is then dephosphorylated to form the acireductone 1,2-dihydroxy-3-keto-5-methylthiopentene (DHK-MTPene). The polypeptide is Enolase-phosphatase E1 (Synechococcus elongatus (strain ATCC 33912 / PCC 7942 / FACHB-805) (Anacystis nidulans R2)).